Here is a 433-residue protein sequence, read N- to C-terminus: GTPase Obg (433 aa).

In terms of domain architecture, Obg spans 1 to 159 (MKFVDSADLI…FEIRAELKVL (159 aa)). The OBG-type G domain maps to 160 to 332 (ADVGFVGLPN…LLFMIYEELK (173 aa)). GTP contacts are provided by residues 166-173 (GLPNAGKS), 191-195 (FTTIT), 213-216 (DLPG), 284-287 (NKMD), and 313-315 (SGL). Mg(2+)-binding residues include serine 173 and threonine 193. The OCT domain occupies 355–433 (KFEEQKEDIQ…VFDYELEWTD (79 aa)).

The protein belongs to the TRAFAC class OBG-HflX-like GTPase superfamily. OBG GTPase family. As to quaternary structure, monomer. It depends on Mg(2+) as a cofactor.

It is found in the cytoplasm. In terms of biological role, an essential GTPase which binds GTP, GDP and possibly (p)ppGpp with moderate affinity, with high nucleotide exchange rates and a fairly low GTP hydrolysis rate. Plays a role in control of the cell cycle, stress response, ribosome biogenesis and in those bacteria that undergo differentiation, in morphogenesis control. In Mycoplasma mycoides subsp. mycoides SC (strain CCUG 32753 / NCTC 10114 / PG1), this protein is GTPase Obg.